The sequence spans 213 residues: Putative 3-methyladenine DNA glycosylase (213 aa).

Belongs to the DNA glycosylase MPG family.

The polypeptide is Putative 3-methyladenine DNA glycosylase (Paraburkholderia phytofirmans (strain DSM 17436 / LMG 22146 / PsJN) (Burkholderia phytofirmans)).